Here is a 298-residue protein sequence, read N- to C-terminus: Transcription factor bHLH114 (298 aa).

A coiled-coil region spans residues 117-149 (LDHEIRNHKSSKEQITQDYKNLTSKRSEELEEN). Residues 126-154 (SSKEQITQDYKNLTSKRSEELEENSDEYS) form a disordered region. The span at 129 to 140 (EQITQDYKNLTS) shows a compositional bias: polar residues. The bHLH domain maps to 163–212 (LETLSPLPSFKVRKEKLGDRITALQQLVSPFGKTDTASVLNEAVEYIKFL).

Homodimer. As to expression, differentiating root endodermis.

It localises to the nucleus. In Arabidopsis thaliana (Mouse-ear cress), this protein is Transcription factor bHLH114 (BHLH114).